The sequence spans 212 residues: Telomere repeats-binding bouquet formation protein 2 (212 aa).

It belongs to the TERB2 family. Component of the MAJIN-TERB1-TERB2 complex.

Functionally, meiosis-specific telomere-associated protein involved in meiotic telomere attachment to the nucleus inner membrane, a crucial step for homologous pairing and synapsis. Component of the MAJIN-TERB1-TERB2 complex, which promotes telomere cap exchange by mediating attachment of telomeric DNA to the inner nuclear membrane and replacement of the protective cap of telomeric chromosomes: in early meiosis, the MAJIN-TERB1-TERB2 complex associates with telomeric DNA and the shelterin/telosome complex. During prophase, the complex matures and promotes release of the shelterin/telosome complex from telomeric DNA. The sequence is that of Telomere repeats-binding bouquet formation protein 2 from Danio rerio (Zebrafish).